Consider the following 333-residue polypeptide: Holliday junction branch migration complex subunit RuvB (333 aa).

The tract at residues 1–182 is large ATPase domain (RuvB-L); sequence MEERLVSGEV…FGVISRLEYY (182 aa). ATP is bound by residues leucine 21, arginine 22, glycine 63, lysine 66, threonine 67, threonine 68, 129 to 131, arginine 172, tyrosine 182, and arginine 219; that span reads EDY. Position 67 (threonine 67) interacts with Mg(2+). The interval 183–253 is small ATPAse domain (RuvB-S); sequence HVDQLAQIIE…LAVEALERLQ (71 aa). Residues 256 to 333 are head domain (RuvB-H); sequence RLGLDQIDHK…THLGMEVPKR (78 aa). DNA contacts are provided by arginine 311 and arginine 316.

It belongs to the RuvB family. In terms of assembly, homohexamer. Forms an RuvA(8)-RuvB(12)-Holliday junction (HJ) complex. HJ DNA is sandwiched between 2 RuvA tetramers; dsDNA enters through RuvA and exits via RuvB. An RuvB hexamer assembles on each DNA strand where it exits the tetramer. Each RuvB hexamer is contacted by two RuvA subunits (via domain III) on 2 adjacent RuvB subunits; this complex drives branch migration. In the full resolvosome a probable DNA-RuvA(4)-RuvB(12)-RuvC(2) complex forms which resolves the HJ.

The protein localises to the cytoplasm. The enzyme catalyses ATP + H2O = ADP + phosphate + H(+). In terms of biological role, the RuvA-RuvB-RuvC complex processes Holliday junction (HJ) DNA during genetic recombination and DNA repair, while the RuvA-RuvB complex plays an important role in the rescue of blocked DNA replication forks via replication fork reversal (RFR). RuvA specifically binds to HJ cruciform DNA, conferring on it an open structure. The RuvB hexamer acts as an ATP-dependent pump, pulling dsDNA into and through the RuvAB complex. RuvB forms 2 homohexamers on either side of HJ DNA bound by 1 or 2 RuvA tetramers; 4 subunits per hexamer contact DNA at a time. Coordinated motions by a converter formed by DNA-disengaged RuvB subunits stimulates ATP hydrolysis and nucleotide exchange. Immobilization of the converter enables RuvB to convert the ATP-contained energy into a lever motion, pulling 2 nucleotides of DNA out of the RuvA tetramer per ATP hydrolyzed, thus driving DNA branch migration. The RuvB motors rotate together with the DNA substrate, which together with the progressing nucleotide cycle form the mechanistic basis for DNA recombination by continuous HJ branch migration. Branch migration allows RuvC to scan DNA until it finds its consensus sequence, where it cleaves and resolves cruciform DNA. The polypeptide is Holliday junction branch migration complex subunit RuvB (Geobacillus kaustophilus (strain HTA426)).